The following is a 3957-amino-acid chain: Ankyrin-2 (3957 aa).

Residues 1-14 (MMNEDAAQKSDSGE) are compositionally biased toward basic and acidic residues. Residues 1 to 34 (MMNEDAAQKSDSGEKFNGSSQRRKRPKKSDSNAS) are disordered. ANK repeat units lie at residues 30-62 (DSNA…TCNQ), 63-92 (NGLN…SVDS), 96-125 (KGNT…NINA), 129-158 (NGFT…NQST), 162-191 (DGFT…KGKV), 193-220 (LPAL…NADV), 232-261 (SGFT…AVDF), 265-294 (NGIT…QIDA), 298-327 (DGLT…PLLA), 331-360 (NGLS…PVDD), 364-393 (DYLT…NPNA), 397-426 (NGFT…SIQA), 430-459 (SGLT…SPDV), 463-492 (RGET…LVDA), 496-525 (EEQT…HPDA), 529-558 (NGYT…AHSL), 562-591 (KGFT…AADS), 595-624 (NGLT…SPHA), 628-657 (NGYT…ETNI), 661-690 (QGVT…NIHM), 694-723 (SGLT…DQDA), 727-756 (LGYT…NVNA), 760-789 (NGYT…KPNA), and 793-822 (NGNT…EVTT). 2 positions are modified to phosphoserine: Ser-31 and Ser-34. Tyr-378 is subject to Phosphotyrosine. Tyr-531 is modified (phosphotyrosine). Ser-846 carries the post-translational modification Phosphoserine. Residue Thr-853 is modified to Phosphothreonine. Ser-874 carries the post-translational modification Phosphoserine. The tract at residues 966–1125 (SGFLVSFMVD…ELNEILNGMD (160 aa)) is interaction with SPTBN1. ZU5 domains are found at residues 968-1156 (FLVS…VVSR) and 1158-1304 (KQDS…LIDC). Residues 1289 to 1423 (VSFTTNVSAR…FVKVRDTTQE (135 aa)) form a UPA domain region. A Phosphotyrosine modification is found at Tyr-1382. The 86-residue stretch at 1450–1535 (ITLPIYTKES…SDKAGSIKVK (86 aa)) folds into the Death 1 domain. The segment at 1457–1486 (KESESDQEQEEEIDMTSEKNDETESTETSV) is disordered. Phosphoserine occurs at positions 1459, 1461, 1473, 1500, and 1596. A compositionally biased stretch (acidic residues) spans 1461-1471 (SDQEQEEEIDM). Disordered stretches follow at residues 1670–2137 (AVGR…TDFS), 2197–2411 (ALDG…GLEL), 2430–2484 (AVSH…GIFP), 2507–2586 (SRLL…TPEE), 2604–2852 (EAKQ…SLPH), 2864–2904 (DISA…TDRF), and 2923–2951 (QITS…ANHT). 2 stretches are compositionally biased toward basic and acidic residues: residues 1674-1683 (SSEKEGKDIP) and 1711-1733 (KQKQ…KGSS). Phosphoserine is present on residues Ser-1732, Ser-1733, and Ser-1736. Residues 1766-1783 (IKDKVKALQKRVEDEQKG) show a composition bias toward basic and acidic residues. 7 Repeat A repeats span residues 1806–1817 (HPAASPSLKSER), 1818–1829 (HAPGSPSPKTER), 1830–1841 (HSTLSSSAKTER), 1842–1853 (HPPVSPSSKTEK), 1854–1865 (HSPVSPSAKTER), 1866–1877 (HSPASSSSKTEK), and 1878–1889 (HSPVSPSTKTER). The repeat-rich region stretch occupies residues 1806-1983 (HPAASPSLKS…PVSPTSKTER (178 aa)). A phosphoserine mark is found at Ser-1855 and Ser-1858. 2 stretches are compositionally biased toward basic and acidic residues: residues 1886 to 1902 (KTER…ERHP) and 1921 to 1937 (RTEK…EKRL). The stretch at 1890–1900 (HSPVSSTKTER) is one Repeat A; approximate repeat. 2 Repeat A repeats span residues 1901-1912 (HPPVSPSGKTDK) and 1913-1924 (RPPVSPSGRTEK). The Repeat A; approximate repeat unit spans residues 1925–1935 (HPPVSPGRTEK). Position 1929 is a phosphoserine (Ser-1929). Repeat A repeat units lie at residues 1936–1947 (RLPVSPSGRTDK), 1948–1959 (HQPVSTAGKTEK), 1960–1971 (HLPVSPSGKTEK), and 1972–1983 (QPPVSPTSKTER). Composition is skewed to basic and acidic residues over residues 1980-1994 (KTER…RELM), 2003-2034 (PSKH…KEKG), 2075-2093 (VKKE…HKIP), and 2102-2117 (EESH…KMAD). At Ser-2127 the chain carries Phosphoserine. The span at 2128–2137 (PDRKTSTDFS) shows a compositional bias: basic and acidic residues. Phosphothreonine is present on Thr-2239. The span at 2240-2251 (PETSPESLSFSP) shows a compositional bias: polar residues. Ser-2243 is modified (phosphoserine). The span at 2252 to 2282 (KKSEEQTGETKESTKTETTTEIRSEKEHPTT) shows a compositional bias: basic and acidic residues. At Thr-2269 the chain carries Phosphothreonine. Ser-2275 carries the phosphoserine modification. Positions 2355-2376 (TFGSSAHKTQTDSEVQESTATS) are enriched in polar residues. Phosphoserine is present on residues Ser-2405, Ser-2440, Ser-2454, Ser-2516, and Ser-2521. Residues 2523 to 2545 (EQTSLMESSGKSPLSPDTPSSEE) show a composition bias toward polar residues. Composition is skewed to basic and acidic residues over residues 2576 to 2586 (NGEKKRFTPEE) and 2604 to 2619 (EAKQ…KQEE). Thr-2583 is subject to Phosphothreonine. Residues Ser-2679 and Ser-2701 each carry the phosphoserine modification. A compositionally biased stretch (low complexity) spans 2696–2705 (PSSMDSNSSP). Residues 2729 to 2776 (EPGKSEEEKDSESHLAEDRHAVSTEAEDRSYDKLNRDTDQPKICDGHG) show a composition bias toward basic and acidic residues. Residues Ser-2781 and Ser-2795 each carry the phosphoserine modification. Positions 2781-2791 (SPSSSAAPVSS) are enriched in low complexity. Polar residues predominate over residues 2892–2903 (SQDSSITTQTDR). Ser-2956 bears the Phosphoserine mark. Disordered stretches follow at residues 2987 to 3016 (NFEG…SSFE), 3069 to 3099 (LMVD…SEQN), and 3136 to 3462 (QESR…PTKE). Residues 2998–3016 (QQESTLWEMQSDSVSSSFE) show a composition bias toward polar residues. Ser-3075 carries the phosphoserine modification. Residue Thr-3078 is modified to Phosphothreonine. Low complexity predominate over residues 3078–3087 (TTPDTTPART). Positions 3090–3099 (EEGTPTSEQN) are enriched in polar residues. Over residues 3137 to 3149 (ESREETLSEDVKE) the composition is skewed to basic and acidic residues. The span at 3157-3169 (LPLETSAESLALS) shows a compositional bias: low complexity. Residues 3175 to 3194 (VDDEADLLPDDVSEEVEEIP) show a composition bias toward acidic residues. 2 stretches are compositionally biased toward polar residues: residues 3198-3212 (AQLN…STET) and 3256-3265 (LDFSTLTRSV). Residues Ser-3273, Ser-3276, and Ser-3277 each carry the phosphoserine modification. Positions 3335-3344 (EENKADEAKP) are enriched in basic and acidic residues. Over residues 3357 to 3374 (VEQQLSDLDTSVQKTVAP) the composition is skewed to polar residues. Phosphoserine occurs at positions 3390 and 3409. The segment covering 3409-3423 (SYTETETESRERAEE) has biased composition (basic and acidic residues). Positions 3446–3460 (SRSTTSSCRGGTSPT) are enriched in low complexity. Position 3474 is a phosphoserine (Ser-3474). The Death 2 domain occupies 3569 to 3653 (IEERLAYIAD…DIVHLMETNT (85 aa)). Ser-3735 carries the phosphoserine modification. Phosphothreonine is present on residues Thr-3776, Thr-3797, Thr-3803, and Thr-3814. The segment at 3777–3858 (PGTETSETQK…VESADNQPET (82 aa)) is disordered. Ser-3823 is subject to Phosphoserine. Residues 3832–3841 (PSEHREESSP) are compositionally biased toward basic and acidic residues. Ser-3909 bears the Phosphoserine mark.

As to quaternary structure, interacts with RHBG and SPTBN1. Colocalizes with Na/K ATPase, Na/Ca exchanger and SPTBN1. Directly interacts with DMD; this interaction is necessary for DMD localization at the sarcolemma. Interacts with DCTN4; this interaction is required for DCTN4 retention at costameres. Identified in complexes that contain VIM, EZR, AHNAK, BFSP1, BFSP2, ANK2, PLEC, PRX and spectrin. Interacts (via death domain) with RABGAP1L (via Rab-GAP TBC domain). Post-translationally, phosphorylated at multiple sites by different protein kinases and each phosphorylation event regulates the protein's structure and function. In terms of tissue distribution, present in plasma membrane of neurons as well as glial cells throughout the brain. Expressed in fetal brain and in temporal cortex of adult brain. Also expressed in the inner segments of rod photoreceptors in retina.

It is found in the cytoplasm. It localises to the cytoskeleton. Its subcellular location is the membrane. The protein resides in the myofibril. The protein localises to the sarcomere. It is found in the m line. It localises to the apical cell membrane. Its subcellular location is the cell membrane. The protein resides in the postsynaptic cell membrane. The protein localises to the early endosome. It is found in the recycling endosome. It localises to the lysosome. Its subcellular location is the mitochondrion. The protein resides in the z line. The protein localises to the sarcolemma. It is found in the T-tubule. In terms of biological role, plays an essential role in the localization and membrane stabilization of ion transporters and ion channels in several cell types, including cardiomyocytes, as well as in striated muscle cells. In skeletal muscle, required for proper localization of DMD and DCTN4 and for the formation and/or stability of a special subset of microtubules associated with costameres and neuromuscular junctions. In cardiomyocytes, required for coordinate assembly of Na/Ca exchanger, SLC8A1/NCX1, Na/K ATPases ATP1A1 and ATP1A2 and inositol 1,4,5-trisphosphate (InsP3) receptors at sarcoplasmic reticulum/sarcolemma sites. Required for expression and targeting of SPTBN1 in neonatal cardiomyocytes and for the regulation of neonatal cardiomyocyte contraction rate. In the inner segment of rod photoreceptors, required for the coordinated expression of the Na/K ATPase, Na/Ca exchanger and beta-2-spectrin (SPTBN1). Plays a role in endocytosis and intracellular protein transport. Associates with phosphatidylinositol 3-phosphate (PI3P)-positive organelles and binds dynactin to promote long-range motility of cells. Recruits RABGAP1L to (PI3P)-positive early endosomes, where RABGAP1L inactivates RAB22A, and promotes polarized trafficking to the leading edge of the migrating cells. Part of the ANK2/RABGAP1L complex which is required for the polarized recycling of fibronectin receptor ITGA5 ITGB1 to the plasma membrane that enables continuous directional cell migration. In Homo sapiens (Human), this protein is Ankyrin-2 (ANK2).